Consider the following 257-residue polypeptide: ATP synthase subunit a (257 aa).

Residues 1-4 (MFIT) constitute a propeptide, removed in mature form. Transmembrane regions (helical) follow at residues 27-47 (FSNFGFYLGLSALIAISLAII), 58-78 (IVPQKFGIAMEAIYFTMLNLV), 93-113 (YFPFIWSLFVLILFSNLLRLI), 122-142 (QLIFTLGLSISILIGATILGL), 149-169 (VFGLFLPSGTPTPLIPLLVLI), 189-209 (IIAGHLTMSILGGLIFTFMGL), 214-234 (FIIGFLPITVLVAISLLEFGI), and 236-256 (FIQAYVFAILTCGFINDSLNL).

This sequence belongs to the ATPase A chain family. F-type ATPases have 2 components, CF(1) - the catalytic core - and CF(0) - the membrane proton channel. CF(1) has five subunits: alpha(3), beta(3), gamma(1), delta(1), epsilon(1). CF(0) has three main subunits: a, b and c.

The protein localises to the mitochondrion inner membrane. In terms of biological role, mitochondrial membrane ATP synthase (F(1)F(0) ATP synthase or Complex V) produces ATP from ADP in the presence of a proton gradient across the membrane which is generated by electron transport complexes of the respiratory chain. F-type ATPases consist of two structural domains, F(1) - containing the extramembraneous catalytic core and F(0) - containing the membrane proton channel, linked together by a central stalk and a peripheral stalk. During catalysis, ATP synthesis in the catalytic domain of F(1) is coupled via a rotary mechanism of the central stalk subunits to proton translocation. Key component of the proton channel; it may play a direct role in the translocation of protons across the membrane. The polypeptide is ATP synthase subunit a (atp6) (Schizosaccharomyces pombe (strain 972 / ATCC 24843) (Fission yeast)).